Reading from the N-terminus, the 375-residue chain is Actin (375 aa).

The protein belongs to the actin family.

The protein resides in the cytoplasm. It is found in the cytoskeleton. The enzyme catalyses ATP + H2O = ADP + phosphate + H(+). Its function is as follows. Actins are highly conserved proteins that are involved in various types of cell motility and are ubiquitously expressed in all eukaryotic cells. This is Actin from Giardia intestinalis (Giardia lamblia).